The primary structure comprises 330 residues: GTPase Obg (330 aa).

The Obg domain occupies 1 to 159 (MNFIDEVKIC…MWIHLSLKLL (159 aa)). One can recognise an OBG-type G domain in the interval 160-327 (SDVGLVGLPN…IVKLALKTIK (168 aa)). Residues 166 to 173 (GLPNAGKS), 191 to 195 (FTTLV), 212 to 215 (DIPG), 279 to 282 (NKCD), and 308 to 310 (STY) contribute to the GTP site. Residues Ser-173 and Thr-193 each contribute to the Mg(2+) site.

The protein belongs to the TRAFAC class OBG-HflX-like GTPase superfamily. OBG GTPase family. In terms of assembly, monomer. Requires Mg(2+) as cofactor.

Its subcellular location is the cytoplasm. In terms of biological role, an essential GTPase which binds GTP, GDP and possibly (p)ppGpp with moderate affinity, with high nucleotide exchange rates and a fairly low GTP hydrolysis rate. Plays a role in control of the cell cycle, stress response, ribosome biogenesis and in those bacteria that undergo differentiation, in morphogenesis control. This is GTPase Obg from Rickettsia felis (strain ATCC VR-1525 / URRWXCal2) (Rickettsia azadi).